Here is a 167-residue protein sequence, read N- to C-terminus: Iron-sulfur cluster assembly enzyme ISCU (167 aa).

Residues 1–34 (MAAAGAFRLRRAASALLLRSPRLPARELSAPARL) constitute a mitochondrion transit peptide. Ser14 bears the Phosphoserine; by MTOR mark. Residue Pro46 participates in Zn(2+) binding. The active-site Cysteine persulfide intermediate is the Cys69. Cys69 carries the cysteine persulfide modification. The Zn(2+) site is built by Gly70, Asp71, Cys95, Lys112, and Cys138. Cys138 serves as the catalytic Cysteine persulfide intermediate. A Cysteine persulfide modification is found at Cys138.

Belongs to the NifU family. In terms of assembly, homodimer; Tyr-35-mediated dimerization of two iron- and sulfide-containing ISCU subunit bind to the cysteine desulfurase complex. Component of the mitochondrial core iron-sulfur cluster (ISC) complex composed of NFS1, LYRM4, NDUFAB1, ISCU, FXN, and FDX2; this complex is an heterohexamer containing two copies of each monomer. Interacts (D-state) with NFS1 (homodimer form); each monomer interacts with the C-terminal regions of each NFS1 monomer. Interacts (monomer form) with FXN (via ferrous form); the interaction is possible when both are bound to the dimeric form of the cysteine desulfurase complex (NFS1:LYRM4) and enhances FXN interaction to the dimeric form of the cysteine desulfurase complex (NFS1:LYRM4). Interacts with GLRX5. Interacts (D-state) with HSPA9. Interacts (S-state) with HSCB; this interaction stimulates the ATPase activity of HSPA9. Component of the cytoplasmic core iron-sulfur cluster (ISC) complex composed at least of NFS1, LYRM4, and ISCU; this complex interacts with FXN. Monomer; each monomer binds to the C-terminal regions of NFS1 (cytoplasmic and homodimer form). Interacts with NFS1 (cytoplasmic and homodimer form); this interaction promotes de novo iron-sulfur cluster formation. Interacts with HSCB (cytoplasmic form); this interaction stabilizes the (Fe-S) clusters on ISCU. Post-translationally, phosphorylation at Ser-14 is required for ISCU protein stabilization in the cytosol, whereas dephosphorylation of Ser-14, due to the inhibition of mTORC1 (mammalian target of rapamycin complex 1) complex, leads to degradation of the precursor form and ultimately to a decrease in the mitochondrial mature form. In terms of processing, cysteine persulfide is reduced by thiol-containing molecules such as glutathione and L-cysteine. As to expression, detected in heart, liver, skeletal muscle, brain, pancreas, kidney, lung and placenta.

The protein localises to the mitochondrion. The protein resides in the cytoplasm. It localises to the nucleus. In terms of biological role, mitochondrial scaffold protein, of the core iron-sulfur cluster (ISC) assembly complex, that provides the structural architecture on which the [2Fe-2S] clusters are assembled. The core iron-sulfur cluster (ISC) assembly complex is involved in the de novo synthesis of a [2Fe-2S] cluster, the first step of the mitochondrial iron-sulfur protein biogenesis. This process is initiated by the cysteine desulfurase complex (NFS1:LYRM4:NDUFAB1) that produces persulfide which is delivered on the scaffold protein ISCU in a FXN-dependent manner. Then this complex is stabilized by FDX2 which provides reducing equivalents to accomplish the [2Fe-2S] cluster assembly. Finally, the [2Fe-2S] cluster is transferred from ISCU to chaperone proteins, including HSCB, HSPA9 and GLRX5. Exists as two slow interchanging conformational states, a structured (S) and disordered (D) form. May modulate NFS1 desulfurase activity in a zinc-dependent manner. Modulates the interaction between FXN and the cysteine desulfurase complex. Its function is as follows. Cytoplasmic scaffold protein, of the cytoplasmic core iron-sulfur cluster (ISC) assembly complex that provides the structural architecture on which the Fe-S clusters are assembled and may be involved in the cytoplasmic iron-sulfur protein biogenesis. This is Iron-sulfur cluster assembly enzyme ISCU from Homo sapiens (Human).